The sequence spans 295 residues: Protoheme IX farnesyltransferase (295 aa).

The next 9 membrane-spanning stretches (helical) occupy residues 8 to 28 (VTKPGIIFGNLISVIGGFLLA), 35 to 55 (YPLFLSTLLGVSLVVASGCVF), 74 to 94 (VLVKGLIDPKVSLIYASVLGI), 98 to 118 (LLLYVAANALAMMLAVIGFVI), 132 to 152 (VYGTLIGSLSGAAPPVIGYCA), 162 to 182 (LILLLIFSLWQMPHSYAIAIF), 208 to 228 (ITLYILAFMVATLMLTLSGYA), 233 to 253 (LVVAAAVSVWWLGMALRGYKA), and 264 to 284 (FVFSIIAITSLSVMMSVDFNV).

Belongs to the UbiA prenyltransferase family. Protoheme IX farnesyltransferase subfamily.

Its subcellular location is the cell inner membrane. The enzyme catalyses heme b + (2E,6E)-farnesyl diphosphate + H2O = Fe(II)-heme o + diphosphate. Its pathway is porphyrin-containing compound metabolism; heme O biosynthesis; heme O from protoheme: step 1/1. In terms of biological role, converts heme B (protoheme IX) to heme O by substitution of the vinyl group on carbon 2 of heme B porphyrin ring with a hydroxyethyl farnesyl side group. The protein is Protoheme IX farnesyltransferase of Yersinia pseudotuberculosis serotype O:1b (strain IP 31758).